We begin with the raw amino-acid sequence, 940 residues long: Vacuolar protein sorting-associated protein 54 (940 aa).

Position 30 is a phosphothreonine (threonine 30). The tract at residues 192-218 (QQLERDKPLENGAQGAPGPGTGGQTPT) is disordered. Positions 299 to 325 (HAILAEMEQAADQVRQLRAALAELHSH) form a coiled coil.

Belongs to the VPS54 family.

The protein resides in the golgi apparatus. It localises to the trans-Golgi network. In terms of biological role, may be involved in retrograde transport from early and late endosomes to late Golgi. Required during spermatogenesis for sperm individualization. The polypeptide is Vacuolar protein sorting-associated protein 54 (scat) (Drosophila melanogaster (Fruit fly)).